The chain runs to 456 residues: Major facilitator superfamily domain-containing protein 10 (456 aa).

Transmembrane regions (helical) follow at residues 25 to 45 (VVAVVFLGLLLDLLAFTLLLP), 87 to 107 (VLFGGLIGSVFSLLQFLSAPL), 125 to 145 (LAGVATSYAVWAASKSFAAFL), 149 to 169 (VIGGISKGNVSLCTAIVADLG), 179 to 199 (AVIGVAFSLGFTLGPTLGAFL), 204 to 224 (VPWLALLFAVSDLLFIWCFLP), 278 to 298 (LVYFLYLFLFSGLEFTLSFLV), 311 to 328 (KMFFFIGLTMATIQGAYA), 343 to 363 (AILLLIPASLFVGWGHTLPIL), 365 to 385 (LGLLLYSWAAAVVVPCLSSVV), and 422 to 442 (LAGARVCYTVCAALFLLPFSI).

It belongs to the major facilitator superfamily.

It localises to the nucleus inner membrane. It is found in the cell membrane. Probable organic anion transporter which may serve as a transporter for some non-steroidal anti-inflammatory drugs (NSAIDs) as well as other organic anions across the luminal membranes of renal proximal tubules at the final excretion step into the urine. This is Major facilitator superfamily domain-containing protein 10 (MFSD10) from Bos taurus (Bovine).